The chain runs to 64 residues: Large ribosomal subunit protein bL35 (64 aa).

Positions 1–27 (MPKMKTKSGAKKRFKPTASGFKHKHAF) are disordered.

The protein belongs to the bacterial ribosomal protein bL35 family.

The sequence is that of Large ribosomal subunit protein bL35 from Azotobacter vinelandii (strain DJ / ATCC BAA-1303).